We begin with the raw amino-acid sequence, 369 residues long: Deoxyuridine 5'-triphosphate nucleotidohydrolase (369 aa).

Residues 258-260 (RSS) and 364-365 (FG) contribute to the substrate site.

This sequence belongs to the dUTPase family. The cofactor is Mg(2+).

The enzyme catalyses dUTP + H2O = dUMP + diphosphate + H(+). Its function is as follows. Involved in nucleotide metabolism: produces dUMP, the immediate precursor of thymidine nucleotides and decreases the intracellular concentration of dUTP to avoid uracil incorporation into viral DNA. The chain is Deoxyuridine 5'-triphosphate nucleotidohydrolase from Homo sapiens (Human).